The sequence spans 736 residues: Orphan sodium- and chloride-dependent neurotransmitter transporter NTT5 (736 aa).

Residues 1-138 (MKTEAQPSTS…FAYLWLNSGG (138 aa)) are Cytoplasmic-facing. 3 helical membrane passes run 139–159 (CSFA…LLFL), 177–197 (IIAP…FILG), and 199–219 (YFNV…QFPV). The Extracellular segment spans residues 220-263 (PWEKCPLTMNSSGFDPECERTTPSIYFWYQQALKASDRIEDGGS). Asn-229 carries N-linked (GlcNAc...) asparagine glycosylation. Transmembrane regions (helical) follow at residues 264-284 (PVYS…AFMI), 290-310 (TGKV…GFFI), 338-358 (VWSL…GSVA), and 383-403 (LTLL…ATVI). Residues 404-495 (THRCCERNAE…EAMSFLPPSV (92 aa)) lie on the Extracellular side of the membrane. The next 5 membrane-spanning stretches (helical) occupy residues 496–516 (FWSF…AIGI), 534–554 (HTKL…LFFT), 568–588 (YWIV…VSWA), 609–629 (IFGW…FVTM), and 659–679 (ALLL…AYFV). The Cytoplasmic segment spans residues 680 to 736 (YCRIHRIPFRPKSGDGPMTASTSLPLSHQLTPSKEVQKEEILQVDETKYPSTCNVTS).

The protein belongs to the sodium:neurotransmitter symporter (SNF) (TC 2.A.22) family. SLC6A16 subfamily. In terms of tissue distribution, highly expressed in peripheral tissues, particularly in testis, pancreas, and prostate.

Its subcellular location is the membrane. The polypeptide is Orphan sodium- and chloride-dependent neurotransmitter transporter NTT5 (SLC6A16) (Homo sapiens (Human)).